The chain runs to 301 residues: Alpha-ketoglutarate-dependent sulfate ester dioxygenase (301 aa).

Residue H81 coordinates substrate. The Fe cation site is built by H108 and D110. Residue V111 participates in substrate binding. Residue T135 coordinates 2-oxoglutarate. H264 provides a ligand contact to Fe cation. The 2-oxoglutarate site is built by R275 and R279.

The protein belongs to the TfdA dioxygenase family. As to quaternary structure, homotetramer. Fe(2+) serves as cofactor.

The enzyme catalyses a primary linear alkyl sulfate ester + 2-oxoglutarate + O2 = an aldehyde + sulfate + succinate + CO2 + H(+). The catalysed reaction is 2-ethylhexyl sulfate + 2-oxoglutarate + O2 = 2-ethylhexanal + sulfate + succinate + CO2 + H(+). It catalyses the reaction decyl sulfate + 2-oxoglutarate + O2 = decanal + sulfate + succinate + CO2 + H(+). It carries out the reaction hexyl sulfate + 2-oxoglutarate + O2 = hexanal + sulfate + succinate + CO2 + H(+). The enzyme catalyses nonyl sufate + 2-oxoglutarate + O2 = nonanal + sulfate + succinate + CO2 + H(+). Its activity is regulated as follows. Strongly stimulated by ascorbate. In terms of biological role, catalyzes the oxygenolytic cleavage of 2-ethylhexyl sulfate (2-EHS) in the presence of alpha-ketoglutarate to yield 2-ethyl-hexanal and succinate, the decarboxylated form of alpha-ketoglutarate. It can accept a wide range of alpha-keto acids including 2-oxo-valerate, 2-oxo-adipate, 2-oxo-octanoate, 3-methyl-2-oxo-butyrate, oxaloacetate-alpha-ketoadipate, and alpha-ketooctanoate. It can catalyze the cleavage of medium-chain alkyl sulfate esters such as butylsulfate, pentylsulfate, hexylsulfate, heptylsulfate, octylsulfate, nonylsulfate, decylsulfate and sodium dodecyl sulfate (SDS). The polypeptide is Alpha-ketoglutarate-dependent sulfate ester dioxygenase (Pseudomonas putida (Arthrobacter siderocapsulatus)).